A 561-amino-acid polypeptide reads, in one-letter code: Malate synthase, glyoxysomal (561 aa).

The Proton acceptor role is filled by Arg-177. Residue Asp-462 is the Proton donor of the active site. Residues 559–561 carry the Microbody targeting signal motif; sequence SRL.

This sequence belongs to the malate synthase family.

The protein localises to the glyoxysome. The enzyme catalyses glyoxylate + acetyl-CoA + H2O = (S)-malate + CoA + H(+). It participates in carbohydrate metabolism; glyoxylate cycle; (S)-malate from isocitrate: step 2/2. The polypeptide is Malate synthase, glyoxysomal (Brassica napus (Rape)).